We begin with the raw amino-acid sequence, 148 residues long: uncharacterized protein (148 aa).

The HTH asnC-type domain maps to 4–65; it reads LDKVDIQLVK…IPDLDKLGYM (62 aa). Residues 23-42 constitute a DNA-binding region (H-T-H motif); the sequence is YRELAELMNTTRQRIARRIT.

This is an uncharacterized protein from Pyrococcus abyssi (strain GE5 / Orsay).